The following is a 378-amino-acid chain: Glutamate 5-kinase (378 aa).

Position 21 (Lys-21) interacts with ATP. Substrate-binding residues include Ser-61, Asp-148, and Asn-160. Position 180-181 (180-181) interacts with ATP; sequence TD. The 79-residue stretch at 286 to 364 folds into the PUA domain; sequence RGTLVLDAGA…RRIEELLGYM (79 aa).

Belongs to the glutamate 5-kinase family.

It is found in the cytoplasm. The enzyme catalyses L-glutamate + ATP = L-glutamyl 5-phosphate + ADP. Its pathway is amino-acid biosynthesis; L-proline biosynthesis; L-glutamate 5-semialdehyde from L-glutamate: step 1/2. Functionally, catalyzes the transfer of a phosphate group to glutamate to form L-glutamate 5-phosphate. The protein is Glutamate 5-kinase of Chromohalobacter salexigens (strain ATCC BAA-138 / DSM 3043 / CIP 106854 / NCIMB 13768 / 1H11).